Here is a 303-residue protein sequence, read N- to C-terminus: UDP-3-O-acyl-N-acetylglucosamine deacetylase (303 aa).

Residues His78, His237, and Asp241 each contribute to the Zn(2+) site. The active-site Proton donor is His264.

Belongs to the LpxC family. It depends on Zn(2+) as a cofactor.

The catalysed reaction is a UDP-3-O-[(3R)-3-hydroxyacyl]-N-acetyl-alpha-D-glucosamine + H2O = a UDP-3-O-[(3R)-3-hydroxyacyl]-alpha-D-glucosamine + acetate. Its pathway is glycolipid biosynthesis; lipid IV(A) biosynthesis; lipid IV(A) from (3R)-3-hydroxytetradecanoyl-[acyl-carrier-protein] and UDP-N-acetyl-alpha-D-glucosamine: step 2/6. In terms of biological role, catalyzes the hydrolysis of UDP-3-O-myristoyl-N-acetylglucosamine to form UDP-3-O-myristoylglucosamine and acetate, the committed step in lipid A biosynthesis. This Pseudomonas putida (strain GB-1) protein is UDP-3-O-acyl-N-acetylglucosamine deacetylase.